We begin with the raw amino-acid sequence, 596 residues long: uncharacterized protein (596 aa).

Composition is skewed to basic residues over residues 1 to 10 (MRLRSQKRGN) and 18 to 29 (KTRKGKGKKLKP). The disordered stretch occupies residues 1–30 (MRLRSQKRGNKFVALPAKTRKGKGKKLKPK).

This is an uncharacterized protein from Magallana gigas (Pacific oyster).